The following is a 232-amino-acid chain: Large ribosomal subunit protein uL10c (232 aa).

A chloroplast-targeting transit peptide spans 1–52 (MESTLFLSKPLPTTIKTTTHSLSSVYPNPFKPNNLTFPRTTHKHPTTTTITA).

The protein belongs to the universal ribosomal protein uL10 family. As to quaternary structure, component of the chloroplast large ribosomal subunit (LSU). Mature 70S chloroplast ribosomes of higher plants consist of a small (30S) and a large (50S) subunit. The 30S small subunit contains 1 molecule of ribosomal RNA (16S rRNA) and 24 different proteins. The 50S large subunit contains 3 rRNA molecules (23S, 5S and 4.5S rRNA) and 33 different proteins.

The protein localises to the plastid. It localises to the chloroplast. Its function is as follows. Component of the chloroplast ribosome (chloro-ribosome), a dedicated translation machinery responsible for the synthesis of chloroplast genome-encoded proteins, including proteins of the transcription and translation machinery and components of the photosynthetic apparatus. The protein is Large ribosomal subunit protein uL10c (RPL10) of Spinacia oleracea (Spinach).